We begin with the raw amino-acid sequence, 201 residues long: Pyridoxal 5'-phosphate synthase subunit PdxT (201 aa).

50-52 (GES) provides a ligand contact to L-glutamine. Residue Cys-82 is the Nucleophile of the active site. L-glutamine contacts are provided by residues Arg-115 and 143-144 (IR). Catalysis depends on charge relay system residues His-179 and Glu-181.

Belongs to the glutaminase PdxT/SNO family. In the presence of PdxS, forms a dodecamer of heterodimers. Only shows activity in the heterodimer.

It catalyses the reaction aldehydo-D-ribose 5-phosphate + D-glyceraldehyde 3-phosphate + L-glutamine = pyridoxal 5'-phosphate + L-glutamate + phosphate + 3 H2O + H(+). The catalysed reaction is L-glutamine + H2O = L-glutamate + NH4(+). Its pathway is cofactor biosynthesis; pyridoxal 5'-phosphate biosynthesis. Functionally, catalyzes the hydrolysis of glutamine to glutamate and ammonia as part of the biosynthesis of pyridoxal 5'-phosphate. The resulting ammonia molecule is channeled to the active site of PdxS. The polypeptide is Pyridoxal 5'-phosphate synthase subunit PdxT (Deinococcus geothermalis (strain DSM 11300 / CIP 105573 / AG-3a)).